The sequence spans 166 residues: Lactose-binding lectin l-2 (166 aa).

The N-terminal stretch at 1 to 24 (MVSFKLPAFLCVAVLSSMALVSHG) is a signal peptide. Intrachain disulfides connect Cys-34–Cys-45, Cys-62–Cys-160, and Cys-136–Cys-152. A C-type lectin domain is found at 41-161 (HKNRCYLHVA…CDLLFPSICV (121 aa)).

Homodimer; disulfide-linked. Skin; contained within club cells which are a component of the epidermis in combination with epithelial cells and mucus cells (at protein level).

It localises to the secreted. Its function is as follows. Involved in host defense at the body surface. Causes agglutination and suppresses the growth of the Gram-negative bacterium E.coli K12. Possesses calcium-independent hemagglutinating activity. The chain is Lactose-binding lectin l-2 from Anguilla japonica (Japanese eel).